Reading from the N-terminus, the 365-residue chain is MSDASDQTSRLDGRWPAAILIGAVISAAFVADRLIPNSLLSLPLMAAILVSTLITWWGVPRLRALKMGQVIRTEGPQGHLSKSGTPTMGGLLVVPVGVIIGGLVSSEGRSAQQLLAIALVTLAYMVIGGVDDWSSLTKRTNTGLTPRGKLLLQATAAVLFLGWAGWQGWIAGTVSLPFNLDLPLHWLIWPLALFVFLAESNATNLTDGLDGLASGCGALVFTGLALQLMLRGNAGDPALAGFCMAMAGCWLGFLIHNRNPAKVFMGDTGSLAMGAALSAVALLSDSLWPLLLMGGVFLAESVSVIVQVWVFKATKGADGQGRRVFRMAPLHHHFELGGTPEQVVVPLFWLVTAGLVMLGLGLHPR.

Helical transmembrane passes span 15-35, 39-59, 84-104, 114-134, 156-176, 178-198, 209-229, 235-255, 263-283, 291-311, and 343-363; these read WPAA…DRLI, LLSL…WWGV, GTPT…GGLV, LLAI…DDWS, AAVL…TVSL, FNLD…VFLA, LDGL…LQLM, GDPA…GFLI, VFMG…VALL, LLMG…VWVF, and VVVP…LGLH.

This sequence belongs to the glycosyltransferase 4 family. MraY subfamily. It depends on Mg(2+) as a cofactor.

Its subcellular location is the cell inner membrane. It carries out the reaction UDP-N-acetyl-alpha-D-muramoyl-L-alanyl-gamma-D-glutamyl-meso-2,6-diaminopimeloyl-D-alanyl-D-alanine + di-trans,octa-cis-undecaprenyl phosphate = di-trans,octa-cis-undecaprenyl diphospho-N-acetyl-alpha-D-muramoyl-L-alanyl-D-glutamyl-meso-2,6-diaminopimeloyl-D-alanyl-D-alanine + UMP. The protein operates within cell wall biogenesis; peptidoglycan biosynthesis. Catalyzes the initial step of the lipid cycle reactions in the biosynthesis of the cell wall peptidoglycan: transfers peptidoglycan precursor phospho-MurNAc-pentapeptide from UDP-MurNAc-pentapeptide onto the lipid carrier undecaprenyl phosphate, yielding undecaprenyl-pyrophosphoryl-MurNAc-pentapeptide, known as lipid I. The chain is Phospho-N-acetylmuramoyl-pentapeptide-transferase from Synechococcus sp. (strain WH7803).